Reading from the N-terminus, the 192-residue chain is Ribosome maturation factor RimM (192 aa).

Positions 99-186 (ADEYHVSELV…RIEIAPPPGL (88 aa)) constitute a PRC barrel domain.

Belongs to the RimM family. In terms of assembly, binds ribosomal protein uS19.

It localises to the cytoplasm. In terms of biological role, an accessory protein needed during the final step in the assembly of 30S ribosomal subunit, possibly for assembly of the head region. Essential for efficient processing of 16S rRNA. May be needed both before and after RbfA during the maturation of 16S rRNA. It has affinity for free ribosomal 30S subunits but not for 70S ribosomes. This chain is Ribosome maturation factor RimM, found in Microcystis aeruginosa (strain NIES-843 / IAM M-2473).